Reading from the N-terminus, the 427-residue chain is V-type proton ATPase subunit C 2 (427 aa).

Residues 298–320 (PLGNPARPAAGQTDRDRESEGEG) are disordered.

The protein belongs to the V-ATPase C subunit family. In terms of assembly, V-ATPase is a heteromultimeric enzyme made up of two complexes: the ATP-hydrolytic V1 complex and the proton translocation V0 complex. The V1 complex consists of three catalytic AB heterodimers that form a heterohexamer, three peripheral stalks each consisting of EG heterodimers, one central rotor including subunits D and F, and the regulatory subunits C and H. The proton translocation complex V0 consists of the proton transport subunit a, a ring of proteolipid subunits c9c'', rotary subunit d, subunits e and f, and the accessory subunits ATP6AP1/Ac45 and ATP6AP2/PRR. Predominantly expressed in the lung and kidney. Isoform 1 is lung-specific while isoform 3 is a kidney-specific isoform. Isoform 1 is localized in the lamellar bodies of type II alveolar cells. Isoform 2 is strongly expressed in the cortical and medulla collecting ducts and is found in the plasma membranes of renal alpha and beta intercalated cells.

Subunit of the V1 complex of vacuolar(H+)-ATPase (V-ATPase), a multisubunit enzyme composed of a peripheral complex (V1) that hydrolyzes ATP and a membrane integral complex (V0) that translocates protons. V-ATPase is responsible for acidifying and maintaining the pH of intracellular compartments and in some cell types, is targeted to the plasma membrane, where it is responsible for acidifying the extracellular environment. Subunit C is necessary for the assembly of the catalytic sector of the enzyme and is likely to have a specific function in its catalytic activity. The protein is V-type proton ATPase subunit C 2 (Atp6v1c2) of Mus musculus (Mouse).